A 240-amino-acid polypeptide reads, in one-letter code: Large ribosomal subunit protein bL25 (240 aa).

Disordered regions lie at residues 1-23 (MATVKELKATARPAGGKGAARAE) and 207-240 (PAAAPAAGAKAPAAGAKAPAAGAKAPAAPAAKKK).

Belongs to the bacterial ribosomal protein bL25 family. CTC subfamily. As to quaternary structure, part of the 50S ribosomal subunit; part of the 5S rRNA/L5/L18/L25 subcomplex. Contacts the 5S rRNA. Binds to the 5S rRNA independently of L5 and L18.

Its function is as follows. This is one of the proteins that binds to the 5S RNA in the ribosome where it forms part of the central protuberance. The sequence is that of Large ribosomal subunit protein bL25 from Rhodopseudomonas palustris (strain BisB18).